A 506-amino-acid chain; its full sequence is Cytochrome P450 monooxygenase tpcB (506 aa).

Cysteine 450 provides a ligand contact to heme.

It belongs to the cytochrome P450 family. The cofactor is heme.

The protein operates within secondary metabolite biosynthesis; terpenoid biosynthesis. In terms of biological role, cytochrome P450 monooxygenase; part of the gene cluster that mediates the biosynthesis of terpestacin. The bifunctional terpene synthase tpcA converts isopentenyl diphosphate (IPP) and dimethylallyl diphosphate (DMAPP) into the sesterterpene preterpestacin I. The C-terminal prenyltransferase (PT) domain of tpcA catalyzes formation of GFPP, whereas the N-terminal terpene cyclase (TC) domain catalyzes the cyclization of GFPP into preterpestacin I. The cytochrome P450 monooxygenase tpcB then hydroxylates preterpestacin I to yield 24-hydroxypreterpstacin I (renamed as preterpestacin II) whereas the cytochrome P450 monooxygenase tpcC further hydroxylates preterpestacin II to yield 16,17-dihydroxypreterpestacin II (renamed as preterpestacin III). Finally, the FAD-dependent monooxygenase tpcD converts preterpestacin III into terpestacin. This Cochliobolus heterostrophus (strain C5 / ATCC 48332 / race O) (Southern corn leaf blight fungus) protein is Cytochrome P450 monooxygenase tpcB.